The sequence spans 795 residues: Phenylalanine--tRNA ligase beta subunit (795 aa).

A tRNA-binding domain is found at 39 to 148 (AGSFHGVVVG…ADAPIGTDIR (110 aa)). In terms of domain architecture, B5 spans 401-476 (PKRATITLRR…RVYGYNNIPD (76 aa)). Residues D454, D460, E463, and E464 each contribute to the Mg(2+) site. Residues 701–794 (SRFPANRRDI…LKERFQASLR (94 aa)) enclose the FDX-ACB domain.

It belongs to the phenylalanyl-tRNA synthetase beta subunit family. Type 1 subfamily. In terms of assembly, tetramer of two alpha and two beta subunits. Mg(2+) serves as cofactor.

It is found in the cytoplasm. It carries out the reaction tRNA(Phe) + L-phenylalanine + ATP = L-phenylalanyl-tRNA(Phe) + AMP + diphosphate + H(+). This is Phenylalanine--tRNA ligase beta subunit from Escherichia coli O157:H7.